Reading from the N-terminus, the 160-residue chain is Epithelial membrane protein 1 (160 aa).

A helical transmembrane segment spans residues 1–21; the sequence is MLVLLAGLFVVHIATAIMLFV. N35 and N43 each carry an N-linked (GlcNAc...) asparagine glycan. 2 helical membrane passes run 67–87 and 95–115; these read FMIL…FQLF and FFLS…GVSI. An N-linked (GlcNAc...) asparagine glycan is attached at N128. A helical membrane pass occupies residues 137–157; the sequence is FILTWICFCFSFIIGILYMVL.

Belongs to the PMP-22/EMP/MP20 family.

It localises to the membrane. The polypeptide is Epithelial membrane protein 1 (Emp1) (Mus musculus (Mouse)).